The following is a 1159-amino-acid chain: PAN2-PAN3 deadenylation complex catalytic subunit pan2 (1159 aa).

A WD repeat occupies 276-315; it reads ANVSFMLGIDISPSGEALAINDAECMVHLWGSPAKIHFNE. The linker stretch occupies residues 316 to 451; the sequence is MSKEVELADV…GAKLNGEAED (136 aa). The 370-residue stretch at 452 to 821 folds into the USP domain; the sequence is DPLLKYSNVE…VPCVLAFQVK (370 aa). In terms of domain architecture, Exonuclease spans 872 to 1048; sequence LDTEFVDLEK…IEDARMALRL (177 aa). 4 residues coordinate a divalent metal cation: Asp-873, Glu-875, Asp-982, and Asp-1041. The interval 1094 to 1159 is disordered; it reads TAVTMQNTNS…GDFFGGSPLK (66 aa). Positions 1096–1106 are enriched in polar residues; that stretch reads VTMQNTNSGRN. Residues 1107-1128 show a composition bias toward low complexity; sequence TPTVPDAAGAPAVPASAPTTPG. The span at 1143 to 1153 shows a compositional bias: gly residues; that stretch reads TFSGPGAGDFF.

It belongs to the peptidase C19 family. PAN2 subfamily. Forms a heterotrimer with an asymmetric homodimer of the regulatory subunit pan3 to form the poly(A)-nuclease (PAN) deadenylation complex. A divalent metal cation serves as cofactor.

The protein localises to the cytoplasm. It carries out the reaction Exonucleolytic cleavage of poly(A) to 5'-AMP.. Its activity is regulated as follows. Positively regulated by the regulatory subunit pan3. Catalytic subunit of the poly(A)-nuclease (PAN) deadenylation complex, one of two cytoplasmic mRNA deadenylases involved in mRNA turnover. PAN specifically shortens poly(A) tails of RNA and the activity is stimulated by poly(A)-binding protein pab1. PAN deadenylation is followed by rapid degradation of the shortened mRNA tails by the CCR4-NOT complex. Deadenylated mRNAs are then degraded by two alternative mechanisms, namely exosome-mediated 3'-5' exonucleolytic degradation, or deadenylation-dependent mRNA decaping and subsequent 5'-3' exonucleolytic degradation by xrn1. May also be involved in post-transcriptional maturation of mRNA poly(A) tails. The chain is PAN2-PAN3 deadenylation complex catalytic subunit pan2 from Aspergillus terreus (strain NIH 2624 / FGSC A1156).